A 157-amino-acid polypeptide reads, in one-letter code: Small ribosomal subunit protein uS7 (157 aa).

Belongs to the universal ribosomal protein uS7 family. In terms of assembly, part of the 30S ribosomal subunit. Contacts proteins S9 and S11.

Its function is as follows. One of the primary rRNA binding proteins, it binds directly to 16S rRNA where it nucleates assembly of the head domain of the 30S subunit. Is located at the subunit interface close to the decoding center, probably blocks exit of the E-site tRNA. This chain is Small ribosomal subunit protein uS7, found in Acidovorax ebreus (strain TPSY) (Diaphorobacter sp. (strain TPSY)).